Consider the following 370-residue polypeptide: Peptidyl-prolyl cis-trans isomerase D (370 aa).

A Phosphoserine modification is found at Ser5. Residues 19 to 183 form the PPIase cyclophilin-type domain; the sequence is FFDVDIGGER…KLCVIAECGE (165 aa). Position 171 is an N6-acetyllysine (Lys171). The tract at residues 185 to 215 is chaperone activity; it reads KEGDDWGIFPKDGSGDSHPDFPEDADIDLKD. Residue Ser198 is modified to Phosphoserine. Residues 214–370 form an interaction with HSP90AB1 region; it reads KDVDKILLIS…EKAVYAKMFA (157 aa). 3 TPR repeats span residues 223–256, 273–306, and 307–340; these read SEDL…VDSS, LSCV…DPSN, and TKAL…APGD.

This sequence belongs to the cyclophilin-type PPIase family. PPIase D subfamily. Identified in ESR1 or NR3C1/GCR steroid receptor-chaperone complexes. Found in HSP90 chaperone complexes with kinase clients LCK or EIF2AK1. Two monomers associate with one HSP90 homodimer. Interacts with HSP90AA1. Interacts with HSP90AB1; PPID and FKBP4 compete for binding to HSP90AB1 and the interaction is mutually exclusive with the PPID:HSPA8 interaction. Interacts with HSPA8; PPID and STIP1 but not FKBP4 compete for binding to HSPA8 and the interaction is mutually exclusive with the PPID:HSP90AB1 interaction. Interacts with S100A1 and S100A2; the interactions dissociate the PPID:HSP90AA1 interaction. Interacts with S100A6. Interacts with MYB, ILF2, XRCC6, RACK1 and RPS3. Interacts with cytoplasmic dynein 1 intermediate chain (DYNC1I1 or DYNC1I2).

It is found in the cytoplasm. It localises to the nucleus. The protein localises to the nucleolus. The protein resides in the nucleoplasm. The catalysed reaction is [protein]-peptidylproline (omega=180) = [protein]-peptidylproline (omega=0). With respect to regulation, less sensitive to inhibition by cyclosporin A than is CYP-18. Functionally, PPIase that catalyzes the cis-trans isomerization of proline imidic peptide bonds in oligopeptides and may therefore assist protein folding. Proposed to act as a co-chaperone in HSP90 complexes such as in unligated steroid receptors heterocomplexes. Different co-chaperones seem to compete for association with HSP90 thus establishing distinct HSP90-co-chaperone-receptor complexes with the potential to exert tissue-specific receptor activity control. May have a preference for estrogen receptor complexes and is not found in glucocorticoid receptor complexes. May be involved in cytoplasmic dynein-dependent movement of the receptor from the cytoplasm to the nucleus. May regulate MYB by inhibiting its DNA-binding activity. Involved in regulation of AHR signaling by promoting the formation of the AHR:ARNT dimer; the function is independent of HSP90 but requires the chaperone activity region. Involved in regulation of UV radiation-induced apoptosis. This is Peptidyl-prolyl cis-trans isomerase D from Mus musculus (Mouse).